We begin with the raw amino-acid sequence, 179 residues long: Inosine/xanthosine triphosphatase (179 aa).

Residue E71 coordinates Mg(2+). A substrate-binding site is contributed by 71-72 (EA).

Belongs to the YjjX NTPase family. Homodimer. Mg(2+) is required as a cofactor. Mn(2+) serves as cofactor.

The catalysed reaction is XTP + H2O = XDP + phosphate + H(+). The enzyme catalyses ITP + H2O = IDP + phosphate + H(+). Functionally, phosphatase that hydrolyzes non-canonical purine nucleotides such as XTP and ITP to their respective diphosphate derivatives. Probably excludes non-canonical purines from DNA/RNA precursor pool, thus preventing their incorporation into DNA/RNA and avoiding chromosomal lesions. The chain is Inosine/xanthosine triphosphatase from Shewanella sp. (strain ANA-3).